We begin with the raw amino-acid sequence, 266 residues long: Small ribosomal subunit protein mS42 (266 aa).

The protein belongs to the mitochondrion-specific ribosomal protein mS42 family. Component of the mitochondrial small ribosomal subunit (mt-SSU). Mature yeast 74S mitochondrial ribosomes consist of a small (37S) and a large (54S) subunit. The 37S small subunit contains a 15S ribosomal RNA (15S mt-rRNA) and 34 different proteins. The 54S large subunit contains a 21S rRNA (21S mt-rRNA) and 46 different proteins. mS42 forms a heterodimer with mS43, building a large protuberance adjacent to the mRNA channel exit in the mt-SSU body.

Its subcellular location is the mitochondrion. In terms of biological role, component of the mitochondrial ribosome (mitoribosome), a dedicated translation machinery responsible for the synthesis of mitochondrial genome-encoded proteins, including at least some of the essential transmembrane subunits of the mitochondrial respiratory chain. The mitoribosomes are attached to the mitochondrial inner membrane and translation products are cotranslationally integrated into the membrane. The chain is Small ribosomal subunit protein mS42 (RSM26) from Saccharomyces cerevisiae (strain ATCC 204508 / S288c) (Baker's yeast).